Consider the following 932-residue polypeptide: Protocadherin gamma-A6 (932 aa).

An N-terminal signal peptide occupies residues 1–29 (MAPPQRHPQRSEQVLLLTLLGTLWGAAAA). Cadherin domains follow at residues 30–133 (QIRY…TPRF), 134–242 (LKEE…TPVF), 243–347 (TQPV…VPEV), 348–452 (VVTS…PPTF), 453–562 (PHSS…APEI), and 570–682 (DGST…EPSA). The Extracellular portion of the chain corresponds to 30–692 (QIRYSIPEEL…KPNDSDLTLY (663 aa)). Residue Asn81 is glycosylated (N-linked (GlcNAc...) asparagine). 2 N-linked (GlcNAc...) asparagine glycosylation sites follow: Asn419 and Asn545. Asn685 carries an N-linked (GlcNAc...) asparagine glycan. The helical transmembrane segment at 693 to 713 (LVVAVAAVSCVFLAFVIVLLA) threads the bilayer. At 714–932 (LRLQRWHKSR…KKKSGKKEKK (219 aa)) the chain is on the cytoplasmic side. 2 disordered regions span residues 803–841 (DPRQ…WPNN) and 902–932 (ATLT…KEKK). A compositionally biased stretch (polar residues) spans 806–841 (QLQQAPPNTDWRFSQAQRPGTSGSQNGDDTGTWPNN). Residues 922–932 (NKKKSGKKEKK) are compositionally biased toward basic residues.

The protein localises to the cell membrane. Its function is as follows. Potential calcium-dependent cell-adhesion protein. May be involved in the establishment and maintenance of specific neuronal connections in the brain. This chain is Protocadherin gamma-A6 (PCDHGA6), found in Pan troglodytes (Chimpanzee).